We begin with the raw amino-acid sequence, 1391 residues long: Periaxin (1391 aa).

The residue at position 7 (Ser7) is a Phosphoserine. The region spanning 16–99 (LVEIIVETEA…YKVSFCLKRT (84 aa)) is the PDZ domain. The Nuclear export signal motif lies at 70–84 (VFFENFKYEDALRLL). Residues 118 to 196 (KGPRAKVAKL…RLQLPRLRVR (79 aa)) carry the Nuclear localization signal motif. Ser243 is subject to Phosphoserine. 12 consecutive repeat copies span residues 432-436 (GPEVK), 440-444 (GPEVK), 448-452 (VPEVK), 456-460 (VPEAA), 464-468 (VQLPE), 469-473 (VQLPK), 474-478 (MSDMK), 482-486 (IPEMV), 487-491 (VPDVR), 495-499 (VQLPK), 500-504 (VPEMK), and 508-512 (MKLPK). The 45 X 5 AA approximate tandem repeats of [LVMGIED]-[PQSKHARMI]-[EDKLVTR]-[LIVMAP]-[AQKHRPEVSD]; that may have a tripeptide spacer of [LVIDEA]-[PMSVI]-[KEATDQ] stretch occupies residues 432–719 (GPEVKAPTGP…MQVSQVPEVQ (288 aa)). The stretch at 513–517 (WPEMA) is one 13; approximate repeat. 32 tandem repeats follow at residues 521 to 525 (VHLPD), 526 to 530 (VQLPK), 534 to 538 (MKLPK), 539 to 543 (VPEMA), 547 to 551 (VHLPD), 552 to 556 (VQLPK), 560 to 564 (MKLPE), 565 to 569 (MKLPK), 573 to 577 (MAVPD), 578 to 582 (VRLPE), 583 to 587 (VQLPK), 591 to 595 (VKLPK), 596 to 600 (MPEMA), 601 to 605 (VPDVH), 609 to 613 (LQLPK), 614 to 618 (MSEVK), 619 to 623 (LPKMP), 627 to 631 (VPDVR), 632 to 636 (LPEVQ), 637 to 641 (LPKVS), 645 to 649 (LPKMP), 650 to 654 (EMTMP), 655 to 659 (DIRLP), 663 to 667 (LPKVP), 671 to 675 (LPEMK), 676 to 680 (LPEIK), 684 to 688 (VPDMA), 689 to 693 (VPDVP), 697 to 701 (LQLPK), 702 to 706 (VSDIR), 707 to 711 (LPEMQ), and 715 to 719 (VPEVQ). Phosphoserine occurs at positions 848, 979, 1028, 1279, 1283, 1285, 1293, 1331, and 1337. Residues 1267 to 1366 (LPRVGFSQSE…DREEGGFRVR (100 aa)) form a disordered region. The span at 1275–1285 (SESVSGEGSPS) shows a compositional bias: low complexity. A compositionally biased stretch (basic and acidic residues) spans 1354–1363 (GSRDREEGGF). Residue Ser1369 is modified to Phosphoserine.

The protein belongs to the periaxin family. As to quaternary structure, homodimer (via PDZ domain). Interacts with SCN10A. Found in a complex with SCN10A. Interacts with DRP2. Identified in a dystroglycan complex that contains at least PRX, DRP2, UTRN, DMD and DAG1. Detected in a complex composed of at least EZR, AHNAK, PPL and PRX. Identified in a complex with EZR, AHNAK, BFSP1, BFSP2, ANK2, PLEC, VIM and spectrin. In terms of tissue distribution, detected in myelinating Schwann cells in intramuscular nerves in triangularis sterni. Detected in sciatic nerve. Detected in eye lens fiber cells. Isoform 1 is detected in myelinating Schwann cells in sciatic nerve. Isoform 2 is detected in myelinating Schwann cells in sciatic nerve (at protein level). Detected in sciatic nerve.

It is found in the cell membrane. It localises to the cell junction. The protein resides in the nucleus. The protein localises to the cytoplasm. In terms of biological role, scaffolding protein that functions as part of a dystroglycan complex in Schwann cells, and as part of EZR and AHNAK-containing complexes in eye lens fiber cells. Required for the maintenance of the peripheral myelin sheath that is essential for normal transmission of nerve impulses and normal perception of sensory stimuli. Required for normal transport of MBP mRNA from the perinuclear to the paranodal regions. Required for normal remyelination after nerve injury. Required for normal elongation of Schwann cells and normal length of the internodes between the nodes of Ranvier. The demyelinated nodes of Ranvier permit saltatory transmission of nerve impulses; shorter internodes cause slower transmission of nerve impulses. Required for the formation of appositions between the abaxonal surface of the myelin sheath and the Schwann cell plasma membrane; the Schwann cell cytoplasm is restricted to regions between these appositions. Required for the formation of Cajal bands and of Schmidt-Lanterman incisures that correspond to short, cytoplasm-filled regions on myelinated nerves. Recruits DRP2 to the Schwann cell plasma membrane. Required for normal protein composition of the eye lens fiber cell plasma membrane and normal eye lens fiber cell morphology. In Mus musculus (Mouse), this protein is Periaxin (Prx).